The chain runs to 179 residues: Large ribosomal subunit protein uL5 (179 aa).

The protein belongs to the universal ribosomal protein uL5 family. In terms of assembly, part of the 50S ribosomal subunit; part of the 5S rRNA/L5/L18/L25 subcomplex. Contacts the 5S rRNA and the P site tRNA. Forms a bridge to the 30S subunit in the 70S ribosome.

This is one of the proteins that bind and probably mediate the attachment of the 5S RNA into the large ribosomal subunit, where it forms part of the central protuberance. In the 70S ribosome it contacts protein S13 of the 30S subunit (bridge B1b), connecting the 2 subunits; this bridge is implicated in subunit movement. Contacts the P site tRNA; the 5S rRNA and some of its associated proteins might help stabilize positioning of ribosome-bound tRNAs. In Rickettsia africae (strain ESF-5), this protein is Large ribosomal subunit protein uL5.